The chain runs to 98 residues: Prostate and testis expressed protein 3 (98 aa).

The N-terminal stretch at 1–20 (MNKHFLFLFLLYCLIVAVTS) is a signal peptide. One can recognise a UPAR/Ly6 domain in the interval 21–97 (LQCITCHLRT…CCNYNYCNFK (77 aa)). 4 disulfides stabilise this stretch: Cys-23-Cys-50, Cys-26-Cys-35, Cys-42-Cys-68, and Cys-72-Cys-88.

The protein belongs to the PATE family. As to expression, specifically expressed in prostate and testis.

Its subcellular location is the secreted. The sequence is that of Prostate and testis expressed protein 3 (PATE3) from Homo sapiens (Human).